The primary structure comprises 184 residues: Protein DESIGUAL 3 (184 aa).

An N-terminal signal peptide occupies residues 1–24; the sequence is MESELGFLVSVVIICADITATVLG. A compositionally biased stretch (basic residues) spans 34 to 45; it reads APHHHHQQHSRH. Residues 34-53 are disordered; the sequence is APHHHHQQHSRHSGSGCRRS. Transmembrane regions (helical) follow at residues 62–82, 99–119, and 140–160; these read GVAA…LGGC, ILAV…YSTL, and FFLI…AYYV. Residue Asn180 is glycosylated (N-linked (GlcNAc...) asparagine).

This sequence belongs to the DESIGUAL family. As to expression, mainly expressed in roots, inflorescences and developing leaves, and, at low levels, in mature leaves.

The protein resides in the endoplasmic reticulum membrane. Functionally, involved, partially redundantly with VCC/DEAL1 and DEAL2, to ensure bilateral symmetry development and early leaf margin patterning, probably via the regulation of auxin and CUC2 distribution. This is Protein DESIGUAL 3 from Arabidopsis thaliana (Mouse-ear cress).